A 421-amino-acid chain; its full sequence is 3-isopropylmalate dehydratase large subunit (421 aa).

[4Fe-4S] cluster-binding residues include Cys-300, Cys-360, and Cys-363.

The protein belongs to the aconitase/IPM isomerase family. LeuC type 2 subfamily. As to quaternary structure, heterodimer of LeuC and LeuD. [4Fe-4S] cluster is required as a cofactor.

The catalysed reaction is (2R,3S)-3-isopropylmalate = (2S)-2-isopropylmalate. The protein operates within amino-acid biosynthesis; L-leucine biosynthesis; L-leucine from 3-methyl-2-oxobutanoate: step 2/4. Catalyzes the isomerization between 2-isopropylmalate and 3-isopropylmalate, via the formation of 2-isopropylmaleate. This chain is 3-isopropylmalate dehydratase large subunit, found in Lachnoclostridium phytofermentans (strain ATCC 700394 / DSM 18823 / ISDg) (Clostridium phytofermentans).